The chain runs to 228 residues: Carboxy-S-adenosyl-L-methionine synthase (228 aa).

S-adenosyl-L-methionine contacts are provided by residues Y30, 55–57, 79–80, and 103–104; these read GSS, DN, and DV.

This sequence belongs to the class I-like SAM-binding methyltransferase superfamily. Cx-SAM synthase family.

The enzyme catalyses prephenate + S-adenosyl-L-methionine = carboxy-S-adenosyl-L-methionine + 3-phenylpyruvate + H2O. Catalyzes the conversion of S-adenosyl-L-methionine (SAM) to carboxy-S-adenosyl-L-methionine (Cx-SAM). The protein is Carboxy-S-adenosyl-L-methionine synthase of Staphylococcus epidermidis (strain ATCC 35984 / DSM 28319 / BCRC 17069 / CCUG 31568 / BM 3577 / RP62A).